The primary structure comprises 880 residues: DNA-directed RNA polymerase subunit Rpo1N (880 aa).

Cys58, Cys61, Cys68, His71, Cys98, Cys101, Cys146, and Cys149 together coordinate Zn(2+). Residues Asp456, Asp458, and Asp460 each contribute to the Mg(2+) site. Zn(2+) contacts are provided by Arg573, Cys575, Cys580, His582, and Ser584.

It belongs to the RNA polymerase beta' chain family. In terms of assembly, part of the 13-subunit RNA polymerase complex. Interacts with TFS4. (Microbial infection) Binds viral protein RIP, which blocks global transcription. Mg(2+) serves as cofactor. The cofactor is Zn(2+).

Its subcellular location is the cytoplasm. The catalysed reaction is RNA(n) + a ribonucleoside 5'-triphosphate = RNA(n+1) + diphosphate. Its activity is regulated as follows. (Microbial infection) Binds to viral protein RIP (AC Q3V4R7), which inhibits global transcription. Its function is as follows. DNA-dependent RNA polymerase (RNAP) catalyzes the transcription of DNA into RNA using the four ribonucleoside triphosphates as substrates. Forms the clamp head domain. This Sulfolobus acidocaldarius (strain ATCC 33909 / DSM 639 / JCM 8929 / NBRC 15157 / NCIMB 11770) protein is DNA-directed RNA polymerase subunit Rpo1N.